Reading from the N-terminus, the 85-residue chain is Toxin BmKa1 (85 aa).

A signal peptide spans 1-19 (MNYLVFFSLALLLMTGVGS). Positions 21–83 (RDGYIADDKN…VPIRVPGKCN (63 aa)) constitute an LCN-type CS-alpha/beta domain. Cystine bridges form between C31-C82, C35-C55, C41-C65, and C45-C67.

Belongs to the long (4 C-C) scorpion toxin superfamily. Sodium channel inhibitor family. Alpha subfamily. In terms of tissue distribution, expressed by the venom gland.

It localises to the secreted. Its function is as follows. Alpha toxins bind voltage-independently at site-3 of sodium channels (Nav) and inhibit the inactivation of the activated channels, thereby blocking neuronal transmission. This is Toxin BmKa1 from Olivierus martensii (Manchurian scorpion).